Here is a 266-residue protein sequence, read N- to C-terminus: MAFRKPDEIAEAAIEAGMKKIKLPLPSLLVLGFLGGAFIALGYLLDIRVIGDLPKEWGSLSSLIGAAVFPVGLILVVLAGAELITGNMMSVAMALFSRKISVKELAINWGIVTIMNLIGALFVAYFFGHLVGLTETGPYLEKTIAVAQGKLDMSFGKVLISAIGCNWLVCLAVWLSFGAQDAAGKILGIWFPIMAFVAIGFQHVVANMFVIPAAIFAGSFTWGQFIGNIIPAFIGNVIGGAVFVGLIYFIAYHKKDRSRKEMKQVS.

A run of 7 helical transmembrane segments spans residues 25–45, 64–84, 111–131, 158–178, 186–206, 209–229, and 230–250; these read LPSL…GYLL, IGAA…AELI, IVTI…GHLV, VLIS…LSFG, ILGI…HVVA, FVIP…IGNI, and IPAF…IYFI.

Belongs to the FNT transporter (TC 1.A.16) family.

It is found in the cell membrane. This is an uncharacterized protein from Bacillus subtilis (strain 168).